Consider the following 201-residue polypeptide: 3-isopropylmalate dehydratase small subunit (201 aa).

The protein belongs to the LeuD family. LeuD type 1 subfamily. As to quaternary structure, heterodimer of LeuC and LeuD.

It carries out the reaction (2R,3S)-3-isopropylmalate = (2S)-2-isopropylmalate. It participates in amino-acid biosynthesis; L-leucine biosynthesis; L-leucine from 3-methyl-2-oxobutanoate: step 2/4. Functionally, catalyzes the isomerization between 2-isopropylmalate and 3-isopropylmalate, via the formation of 2-isopropylmaleate. The polypeptide is 3-isopropylmalate dehydratase small subunit (Rhodopseudomonas palustris (strain BisB18)).